We begin with the raw amino-acid sequence, 632 residues long: Chaperone protein DnaK (632 aa).

Residue threonine 199 is modified to Phosphothreonine; by autocatalysis. A compositionally biased stretch (low complexity) spans 597–611 (AAQQAGQAEGQAAQE). The disordered stretch occupies residues 597 to 632 (AAQQAGQAEGQAAQEPSQSTGNAQAEATDAEYEEVK). The span at 612 to 621 (PSQSTGNAQA) shows a compositional bias: polar residues.

This sequence belongs to the heat shock protein 70 family.

Acts as a chaperone. The chain is Chaperone protein DnaK from Amoebophilus asiaticus (strain 5a2).